Reading from the N-terminus, the 682-residue chain is MSRKMLVTCALPYANGAIHLGHMLEHIQADIWVRFQRMRGNEIYFVCADDAHGTPIMLNAAKQGITPEQLIEKAKTDHVADFKGFNISFDNYHSTHSEENREITTEMYKKLRANGFIKSRVISQLFDPEKQMFLPDRFVKGTCPKCKAEDQYGDNCEVCASTYSPMDLINPRSAVSGATPIVKESEHFFFDLPSFEGMLKEWTRSGSLQSEIANKMQEWFESGLQQWDISRDAPYFGFPIPDAENKFFYVWLDAPIGYMASFKNLCDRTGLNFDEFWKKDSETELYHFIGKDIVYFHSLFWPAMLDGCELRKPTNVFAHGYVTVDGVKMSKSRGTFIQASTYLKHIDPECLRYYYAAKLNERIEDLDLSLEDFVQRVNSDIVNKLVNLASRNASFIAKRFEGKLADKLEDEALFAEFIAQSEQIAAHYENREFNKAIRLIMDLCDKANKYVDDKAPWVIAKQEGCDAQLQAVCSMGIELFRVLMSYLKPVLPQLAERAEAFLQTELTWDNIQQPLLGQNVAPFKSLFSRLEKKQIDAVIEETKALFAAQNKAEDKKGKQKVENTENTAVEPIAAEITIDDFAKLDLRVAKVISCEAVPESNKLLKFQLDLGDHQRQVLSGIKAAYNNPEELVGRFVIMVANLAPRKMKFGVSEGMILSAGTGGADLFLLSADEGIRPGMQVK.

The 'HIGH' region motif lies at 12–22 (PYANGAIHLGH). Zn(2+) is bound by residues C143, C146, C156, and C159. A 'KMSKS' region motif is present at residues 328-332 (KMSKS). An ATP-binding site is contributed by K331. Positions 580–682 (DFAKLDLRVA…EGIRPGMQVK (103 aa)) constitute a tRNA-binding domain.

Belongs to the class-I aminoacyl-tRNA synthetase family. MetG type 1 subfamily. As to quaternary structure, homodimer. The cofactor is Zn(2+).

It is found in the cytoplasm. The enzyme catalyses tRNA(Met) + L-methionine + ATP = L-methionyl-tRNA(Met) + AMP + diphosphate. Is required not only for elongation of protein synthesis but also for the initiation of all mRNA translation through initiator tRNA(fMet) aminoacylation. This is Methionine--tRNA ligase from Actinobacillus pleuropneumoniae serotype 7 (strain AP76).